A 496-amino-acid polypeptide reads, in one-letter code: NADH-ubiquinone oxidoreductase 51 kDa subunit, mitochondrial (496 aa).

The transit peptide at methionine 1 to phenylalanine 30 directs the protein to the mitochondrion. Glycine 98–glycine 107 provides a ligand contact to NAD(+). Glycine 214–threonine 261 lines the FMN pocket. The [4Fe-4S] cluster site is built by cysteine 393, cysteine 396, cysteine 399, and cysteine 439.

Belongs to the complex I 51 kDa subunit family. Complex I is composed of about 40 different subunits. This is a component of the flavoprotein-sulfur (FP) fragment of the enzyme. It depends on FMN as a cofactor. Requires [4Fe-4S] cluster as cofactor.

It localises to the mitochondrion inner membrane. The enzyme catalyses a ubiquinone + NADH + 5 H(+)(in) = a ubiquinol + NAD(+) + 4 H(+)(out). Functionally, core subunit of the mitochondrial membrane respiratory chain NADH dehydrogenase (Complex I) that is believed to belong to the minimal assembly required for catalysis. Complex I functions in the transfer of electrons from NADH to the respiratory chain. The immediate electron acceptor for the enzyme is believed to be ubiquinone. The chain is NADH-ubiquinone oxidoreductase 51 kDa subunit, mitochondrial (NUO51) from Aspergillus niger.